The primary structure comprises 286 residues: Plasma membrane ascorbate-dependent reductase CYBRD1 (286 aa).

Over 1 to 7 (MAMEGYW) the chain is Cytoplasmic. A helical transmembrane segment spans residues 8–32 (RFLALLGSALLVGFLSVIFALVWVL). The Cytochrome b561 domain occupies 15–220 (SALLVGFLSV…FGALIFWIVT (206 aa)). Residues 33-47 (HYREGLGWDGSALEF) lie on the Extracellular side of the membrane. The helical transmembrane segment at 48–69 (NWHPVLMVTGFVFIQGIAIIVY) threads the bilayer. The heme b site is built by His-50, Arg-70, and Lys-79. The Cytoplasmic portion of the chain corresponds to 70 to 78 (RLPWTWKCS). L-ascorbate-binding residues include Lys-79 and Lys-83. The helical transmembrane segment at 79-105 (KLLMKSIHAGLNAVAAILAIISVVAVF) threads the bilayer. Position 86 (His-86) interacts with heme b. The Extracellular segment spans residues 106–118 (ENHNVNNIANMYS). Residue His-108 coordinates Fe(3+). Heme b is bound by residues 115–118 (NMYS) and His-120. The chain crosses the membrane as a helical span at residues 119-144 (LHSWVGLIAVICYLLQLLSGFSVFLL). Over 145 to 151 (PWAPLSL) the chain is Cytoplasmic. Residue Arg-152 participates in L-ascorbate binding. The helical transmembrane segment at 152–179 (RAFLMPIHVYSGIVIFGTVIATALMGLT) threads the bilayer. Heme b-binding residues include His-159 and Glu-180. Residues 180–197 (EKLIFSLRDPAYSTFPPE) lie on the Extracellular side of the membrane. Residues 198–222 (GVFVNTLGLLILVFGALIFWIVTRP) traverse the membrane as a helical segment. Topologically, residues 223-286 (QWKRPKEPNS…LDEAGQRSTM (64 aa)) are cytoplasmic. Lys-225 provides a ligand contact to heme b. The tract at residues 229–268 (EPNSTILHPNGGTEQGARGSMPAYSGNNMDKSDSELNSEV) is disordered. Position 232 is a phosphoserine (Ser-232). Thr-285 is subject to Phosphothreonine.

In terms of assembly, homodimer. It depends on heme b as a cofactor. As to expression, present in erythrocyte membranes (at protein level). Also expressed in respiratory epithelium.

Its subcellular location is the cell membrane. The protein resides in the apical cell membrane. The catalysed reaction is Fe(3+)(out) + L-ascorbate(in) = monodehydro-L-ascorbate radical(in) + Fe(2+)(out) + H(+). It catalyses the reaction Cu(2+)(out) + L-ascorbate(in) = Cu(+)(out) + monodehydro-L-ascorbate radical(in) + H(+). It carries out the reaction monodehydro-L-ascorbate radical(out) + L-ascorbate(in) = monodehydro-L-ascorbate radical(in) + L-ascorbate(out). Activated by chelators like citrate, malate, and oxalate specially at alkaline pH. In terms of biological role, plasma membrane reductase that uses cytoplasmic ascorbate as an electron donor to reduce extracellular Fe(3+) into Fe(2+). Probably functions in dietary iron absorption at the brush border of duodenal enterocytes by producing Fe(2+), the divalent form of iron that can be transported into enterocytes. It is also able to reduce extracellular monodehydro-L-ascorbate and may be involved in extracellular ascorbate regeneration by erythrocytes in blood. May also act as a ferrireductase in airway epithelial cells. May also function as a cupric transmembrane reductase. The protein is Plasma membrane ascorbate-dependent reductase CYBRD1 of Homo sapiens (Human).